The primary structure comprises 823 residues: Leucine--tRNA ligase (823 aa).

Residues 41 to 51 (PYPSGTLHVGH) carry the 'HIGH' region motif. The 'KMSKS' region signature appears at 580-584 (KMSKS). K583 is an ATP binding site.

It belongs to the class-I aminoacyl-tRNA synthetase family.

The protein resides in the cytoplasm. The enzyme catalyses tRNA(Leu) + L-leucine + ATP = L-leucyl-tRNA(Leu) + AMP + diphosphate. In Thermosipho melanesiensis (strain DSM 12029 / CIP 104789 / BI429), this protein is Leucine--tRNA ligase.